The following is a 191-amino-acid chain: ATP synthase subunit b 1 (191 aa).

The chain crosses the membrane as a helical span at residues 7 to 25; sequence RMRILCLCATTLLMAGSAL.

Belongs to the ATPase B chain family. In terms of assembly, F-type ATPases have 2 components, F(1) - the catalytic core - and F(0) - the membrane proton channel. F(1) has five subunits: alpha(3), beta(3), gamma(1), delta(1), epsilon(1). F(0) has three main subunits: a(1), b(2) and c(10-14). The alpha and beta chains form an alternating ring which encloses part of the gamma chain. F(1) is attached to F(0) by a central stalk formed by the gamma and epsilon chains, while a peripheral stalk is formed by the delta and b chains.

The protein localises to the cell inner membrane. Functionally, f(1)F(0) ATP synthase produces ATP from ADP in the presence of a proton or sodium gradient. F-type ATPases consist of two structural domains, F(1) containing the extramembraneous catalytic core and F(0) containing the membrane proton channel, linked together by a central stalk and a peripheral stalk. During catalysis, ATP synthesis in the catalytic domain of F(1) is coupled via a rotary mechanism of the central stalk subunits to proton translocation. Component of the F(0) channel, it forms part of the peripheral stalk, linking F(1) to F(0). The sequence is that of ATP synthase subunit b 1 from Syntrophotalea carbinolica (strain DSM 2380 / NBRC 103641 / GraBd1) (Pelobacter carbinolicus).